We begin with the raw amino-acid sequence, 640 residues long: ATP-dependent rRNA helicase spb4 (640 aa).

The Q motif signature appears at 14–42 (WDAVTPALSEWVLEAMSSMGFTRMTPVQA). The 205-residue stretch at 45–249 (IPLFMAHKDV…RVGLRNPVKV (205 aa)) folds into the Helicase ATP-binding domain. 58–65 (AVTGSGKT) serves as a coordination point for ATP. The DEAD box signature appears at 197 to 200 (DEAD). In terms of domain architecture, Helicase C-terminal spans 283-437 (ALKRILSSVQ…LITFSDADAA (155 aa)). Positions 521-629 (AYKDKQREKR…AAKAAGAKAD (109 aa)) form a coiled coil. Disordered stretches follow at residues 531 to 595 (RKEL…EKQK) and 607 to 640 (RKKN…QGFD). Residues 568-582 (KKLKRREQKKSKHEK) show a composition bias toward basic residues. Positions 583-595 (ARWEKMTEEEKQK) are enriched in basic and acidic residues. Over residues 630-640 (GDDEEEFQGFD) the composition is skewed to acidic residues.

The protein belongs to the DEAD box helicase family. DDX55/SPB4 subfamily. As to quaternary structure, component of pre-60S ribosomal complexes.

It localises to the nucleus. The protein localises to the nucleolus. It carries out the reaction ATP + H2O = ADP + phosphate + H(+). ATP-binding RNA helicase involved in the biogenesis of 60S ribosomal subunits. Binds 90S pre-ribosomal particles and dissociates from pre-60S ribosomal particles after processing of 27SB pre-rRNA. Required for the normal formation of 18S rRNA through the processing of pre-rRNAs at sites A0, A1 and A2, and the normal formation of 25S and 5.8S rRNAs through the processing of pre-rRNAs at sites C1 and C2. This chain is ATP-dependent rRNA helicase spb4, found in Neosartorya fischeri (strain ATCC 1020 / DSM 3700 / CBS 544.65 / FGSC A1164 / JCM 1740 / NRRL 181 / WB 181) (Aspergillus fischerianus).